Consider the following 547-residue polypeptide: DNA mismatch repair protein MutL (547 aa).

Belongs to the DNA mismatch repair MutL/HexB family.

Its function is as follows. This protein is involved in the repair of mismatches in DNA. It is required for dam-dependent methyl-directed DNA mismatch repair. May act as a 'molecular matchmaker', a protein that promotes the formation of a stable complex between two or more DNA-binding proteins in an ATP-dependent manner without itself being part of a final effector complex. The chain is DNA mismatch repair protein MutL from Deinococcus radiodurans (strain ATCC 13939 / DSM 20539 / JCM 16871 / CCUG 27074 / LMG 4051 / NBRC 15346 / NCIMB 9279 / VKM B-1422 / R1).